We begin with the raw amino-acid sequence, 366 residues long: Flagellar P-ring protein (366 aa).

The first 20 residues, 1–20 (MVIKFLSALILLLVTTAAQA), serve as a signal peptide directing secretion.

Belongs to the FlgI family. In terms of assembly, the basal body constitutes a major portion of the flagellar organelle and consists of four rings (L,P,S, and M) mounted on a central rod.

The protein resides in the periplasm. Its subcellular location is the bacterial flagellum basal body. Functionally, assembles around the rod to form the L-ring and probably protects the motor/basal body from shearing forces during rotation. The sequence is that of Flagellar P-ring protein from Escherichia coli O1:K1 / APEC.